Here is a 725-residue protein sequence, read N- to C-terminus: Fatty acid oxidation complex subunit alpha (725 aa).

The tract at residues 1-189 (MLYKGDTLYL…KIGLVDGVVK (189 aa)) is enoyl-CoA hydratase/isomerase. D296 contacts substrate. Residues 311 to 725 (ETPKQAAVLG…RLNQPVRLVL (415 aa)) are 3-hydroxyacyl-CoA dehydrogenase. NAD(+) contacts are provided by residues M324, D343, 400–402 (VVE), K407, and S429. H450 functions as the For 3-hydroxyacyl-CoA dehydrogenase activity in the catalytic mechanism. Residue N453 coordinates NAD(+). Substrate-binding residues include N500 and Y660.

It in the N-terminal section; belongs to the enoyl-CoA hydratase/isomerase family. This sequence in the C-terminal section; belongs to the 3-hydroxyacyl-CoA dehydrogenase family. In terms of assembly, heterotetramer of two alpha chains (FadB) and two beta chains (FadA).

The enzyme catalyses a (3S)-3-hydroxyacyl-CoA + NAD(+) = a 3-oxoacyl-CoA + NADH + H(+). It carries out the reaction a (3S)-3-hydroxyacyl-CoA = a (2E)-enoyl-CoA + H2O. The catalysed reaction is a 4-saturated-(3S)-3-hydroxyacyl-CoA = a (3E)-enoyl-CoA + H2O. It catalyses the reaction (3S)-3-hydroxybutanoyl-CoA = (3R)-3-hydroxybutanoyl-CoA. The enzyme catalyses a (3Z)-enoyl-CoA = a 4-saturated (2E)-enoyl-CoA. It carries out the reaction a (3E)-enoyl-CoA = a 4-saturated (2E)-enoyl-CoA. It participates in lipid metabolism; fatty acid beta-oxidation. Involved in the aerobic and anaerobic degradation of long-chain fatty acids via beta-oxidation cycle. Catalyzes the formation of 3-oxoacyl-CoA from enoyl-CoA via L-3-hydroxyacyl-CoA. It can also use D-3-hydroxyacyl-CoA and cis-3-enoyl-CoA as substrate. The sequence is that of Fatty acid oxidation complex subunit alpha from Salmonella paratyphi A (strain ATCC 9150 / SARB42).